The chain runs to 565 residues: Liver carboxylesterase 1 (565 aa).

An N-terminal signal peptide occupies residues 1–18; sequence MWLCALALASLAACTAWG. The N-linked (GlcNAc...) asparagine glycan is linked to Asn-79. A disulfide bridge connects residues Cys-87 and Cys-116. Ser-221 acts as the Acyl-ester intermediate in catalysis. Cys-273 and Cys-284 form a disulfide bridge. Glu-353 serves as the catalytic Charge relay system. Asn-389 carries an N-linked (GlcNAc...) asparagine glycan. His-467 functions as the Charge relay system in the catalytic mechanism. Residue Leu-565 is a short sequence motif, prevents secretion from ER.

The protein belongs to the type-B carboxylesterase/lipase family. As to quaternary structure, monomer.

The protein resides in the endoplasmic reticulum lumen. It catalyses the reaction a carboxylic ester + H2O = an alcohol + a carboxylate + H(+). Its function is as follows. Involved in the detoxification of xenobiotics and in the activation of ester and amide prodrugs. The sequence is that of Liver carboxylesterase 1 from Oryctolagus cuniculus (Rabbit).